We begin with the raw amino-acid sequence, 294 residues long: Cutinase (294 aa).

The N-terminal stretch at 1–33 (MLRARPSHRLASAAAVVAATGAALLAGSSPAAA) is a signal peptide. An intrachain disulfide couples cysteine 36 to cysteine 107. Catalysis depends on serine 118, which acts as the Nucleophile. Cysteines 180 and 187 form a disulfide. Residue aspartate 184 is part of the active site. Histidine 198 functions as the Proton donor/acceptor in the catalytic mechanism. The disordered stretch occupies residues 222–241 (GTPTTPTPTPTPTPVPTTCV). Over residues 226–236 (TPTPTPTPTPV) the composition is skewed to pro residues. A may be involved in substrate binding region spans residues 240–294 (CVRDSTRDHVAADRAVSLYGRAYARGSRDSLGATSSYNVVSLQQVEGGWRLVTAC).

Belongs to the cutinase family.

It is found in the secreted. The enzyme catalyses cutin + H2O = cutin monomers.. The catalysed reaction is a tetradecanoate ester + H2O = an aliphatic alcohol + tetradecanoate + H(+). It carries out the reaction hexadecanoate ester + H2O = an aliphatic alcohol + hexadecanoate + H(+). It catalyses the reaction a butanoate ester + H2O = an aliphatic alcohol + butanoate + H(+). The enzyme catalyses an octanoate ester + H2O = an aliphatic alcohol + octanoate + H(+). In terms of biological role, catalyzes the hydrolysis of cutin, a polyester that forms the structure of plant cuticle. Shows esterase activity towards p-nitrophenol-linked aliphatic esters (pNP-aliphatic esters). Can depolymerize synthetic polyesters such as poly(epsilon-caprolactone) (PCL) and poly(1,3-propylene adipate) (PPA). Exhibits some activity on poly(lactic acid) (PLA). Can bind but not hydrolyze poly(hydroxybutyrate) (PHB). The protein is Cutinase of Kineococcus radiotolerans (strain ATCC BAA-149 / DSM 14245 / SRS30216).